The following is a 288-amino-acid chain: MQVIIISGLSGSGKSIALKALEDSGYYCVDNLPASLLVILINHLQTQHHSHVAVAIDMRSGDSITVLPWQFKMIDKSIRTEFIFLDTRTDTLIQRFSETRRRHPLSDKNITLEEAIQHEREVLATVSDLGHHIDTSSLRPNALRAFIRDFISDSRDPSQLTLMFQSFGYKHGIPLDADLVFDIRCLPNPFYDPHLKELTGHDLEVIRFMEAQPNAAKMLGDIGSFLDTWLPVYMQDNRAYLTVAIGCTGGQHRSVYFAEKLALHFRDAARVLVRHRGLAEYNQYYARR.

8–15 contacts ATP; the sequence is GLSGSGKS. 57–60 serves as a coordination point for GTP; sequence DMRS.

Belongs to the RapZ-like family.

In terms of biological role, displays ATPase and GTPase activities. The protein is Nucleotide-binding protein Neut_1559 of Nitrosomonas eutropha (strain DSM 101675 / C91 / Nm57).